The primary structure comprises 301 residues: MKSHNAPITKVGVILRPSSPELKTTFLQIKEELNNAGIEVILESISGGMIELLGRDFHQLATQCDALFSLGGDGTLISMLRRAFEYELPCMGINTGRLGFLTALMPQNLHTFTSHLKSGDYTLQKHLVLQARIYSTLNTAYENNLDNKNQTPTQTLIAINEFLISKHELSGMVHIDASIDRKYFNTYRCDGLIIGTPAGSTAYNISAGGSVIYPYCRNILLTPIAPHSLTQRPLVLSDEFMLEFYAKERAKLIIDGQEMIDIMPSDRVQIQALPQSAMLMYPPTRDYFSVLKEKFKWGEEH.

Catalysis depends on Asp73, which acts as the Proton acceptor. NAD(+) is bound by residues 73–74 (DG), 160–161 (NE), Arg188, Asp190, Ala198, 201–206 (TAYNIS), Ala225, and Gln257.

The protein belongs to the NAD kinase family. A divalent metal cation is required as a cofactor.

It is found in the cytoplasm. It carries out the reaction NAD(+) + ATP = ADP + NADP(+) + H(+). Its function is as follows. Involved in the regulation of the intracellular balance of NAD and NADP, and is a key enzyme in the biosynthesis of NADP. Catalyzes specifically the phosphorylation on 2'-hydroxyl of the adenosine moiety of NAD to yield NADP. In Helicobacter hepaticus (strain ATCC 51449 / 3B1), this protein is NAD kinase.